The chain runs to 445 residues: MKIFGTDGVRGKAGVKLTPMFVMRLGIAAGLYFKKHSQTNKILIGKDTRKSGYMVENALVSALTSIGYNVIQIGPMPTPAIAFLTEDMRCDAGIMISASHNPFEDNGIKFFNSYGYKLKEEEEKAIEEIFHDEELLHSSYKVGESIGSAKRIDDVIGRYIVHLKHSFPKHLNLQSLRIVLDTANGAAYKVAPVVFSELGADVLVINDEPNGCNINEQCGALHPNQLSQEVKKYRADLGFAFDGDADRLVVVDNLGNIVHGDKLLGVLGVYQKSKNALSSQAIVATSMSNLALKEYLKSQDLELKHCAIGDKFVSECMRLNKANFGGEQSGHIIFSDYAKTGDGLVCALQVSALVLESKQASSVALNPFELYPQNLVNLNVQKKPPLESLKGYSALLKELDQLEIRHLIRYSGTENKLRILLEAKDEKLLESKMQELKEFFEGHLC.

Serine 99 serves as the catalytic Phosphoserine intermediate. Mg(2+) is bound by residues serine 99, aspartate 242, aspartate 244, and aspartate 246. Phosphoserine is present on serine 99.

Belongs to the phosphohexose mutase family. It depends on Mg(2+) as a cofactor. Post-translationally, activated by phosphorylation.

The enzyme catalyses alpha-D-glucosamine 1-phosphate = D-glucosamine 6-phosphate. In terms of biological role, catalyzes the conversion of glucosamine-6-phosphate to glucosamine-1-phosphate. This Helicobacter pylori (strain G27) protein is Phosphoglucosamine mutase.